The primary structure comprises 217 residues: MSGIRADGTGDVGLIIAVKRLGAAKTRLAPVFSAAARESVVLAMLMDTLTAAARVGDLRSITVITPDESAAAAATELGAEVLADPTRQGDPDPLNNAILTAEQVVSGSVPNIVVLQGDLPAMQTQELADAICAARAHQRSFVADRLGTGTAALCAFGSALDPQFGPDSSARHRRSGAVELTGAWPGLRCDVDTPADLAAARSLGVGPATARVVAHHR.

Residues Thr150, Gly165, and Ser168 each contribute to the phosphoenolpyruvate site.

The protein belongs to the CofC family.

It carries out the reaction phosphoenolpyruvate + GTP + H(+) = enolpyruvoyl-2-diphospho-5'-guanosine + diphosphate. It participates in cofactor biosynthesis; coenzyme F420 biosynthesis. Functionally, guanylyltransferase that catalyzes the activation of phosphoenolpyruvate (PEP) as enolpyruvoyl-2-diphospho-5'-guanosine, via the condensation of PEP with GTP. It is involved in the biosynthesis of coenzyme F420, a hydride carrier cofactor. This chain is Phosphoenolpyruvate guanylyltransferase, found in Mycobacterium marinum (strain ATCC BAA-535 / M).